A 1481-amino-acid polypeptide reads, in one-letter code: Cystic fibrosis transmembrane conductance regulator (1481 aa).

Residues Met1–Phe77 are Cytoplasmic-facing. A helical transmembrane segment spans residues Phe78 to Gln98. The region spanning Phe81–Leu365 is the ABC transmembrane type-1 1 domain. The Extracellular segment spans residues Pro99–Tyr122. Residues Leu123–His146 traverse the membrane as a helical segment. Over His147–Leu195 the chain is Cytoplasmic. A helical membrane pass occupies residues Ala196 to Trp216. The Extracellular segment spans residues Glu217–Phe222. The chain crosses the membrane as a helical span at residues Thr223–Met243. Residues Met244–Lys298 are Cytoplasmic-facing. The helical transmembrane segment at Ala299–Phe319 threads the bilayer. Over Leu320–Thr339 the chain is Extracellular. Residues Ile340 to Val358 traverse the membrane as a helical segment. Residues Gln359–Ser858 are Cytoplasmic-facing. Residues Trp401, Gly457–Thr464, and Gln492 each bind ATP. Positions Asn423–Gly645 constitute an ABC transporter 1 domain. Cys523 is lipidated: S-palmitoyl cysteine. Ser548 carries the post-translational modification Phosphoserine. The disordered R region stretch occupies residues Thr653–Asp831. Phosphoserine; by PKA occurs at positions 659 and 669. Ser685 carries the post-translational modification Phosphoserine; by PKC. Lys687 participates in a covalent cross-link: Glycyl lysine isopeptide (Lys-Gly) (interchain with G-Cter in ubiquitin). Residue Ser699 is modified to Phosphoserine; by PKA. At Ser711 the chain carries Phosphoserine. Thr716 is modified (phosphothreonine). Phosphoserine; by PKA is present on residues Ser736 and Ser767. At Ser790 the chain carries Phosphoserine; by PKC. 2 positions are modified to phosphoserine; by PKA: Ser795 and Ser813. The chain crosses the membrane as a helical span at residues Leu859–Val879. Positions Leu859–Ser1155 constitute an ABC transmembrane type-1 2 domain. Over Val880 to Ile918 the chain is Extracellular. Asn894 and Asn900 each carry an N-linked (GlcNAc...) asparagine glycan. A discontinuously helical membrane pass occupies residues Tyr919–His939. Residues Thr940 to Thr990 lie on the Cytoplasmic side of the membrane. A helical transmembrane segment spans residues Ile991 to Leu1011. Residues Gln1012–Pro1013 lie on the Extracellular side of the membrane. The helical transmembrane segment at Tyr1014–Leu1034 threads the bilayer. The Cytoplasmic segment spans residues His1035–Thr1095. Residues Leu1096–Phe1116 traverse the membrane as a helical segment. Residues Ile1117 to Gly1130 are Extracellular-facing. A helical membrane pass occupies residues Ile1131 to Ile1151. The Cytoplasmic segment spans residues Asp1152–Leu1481. Positions Met1211–Pro1444 constitute an ABC transporter 2 domain. ATP-binding positions include Tyr1220 and Gly1245–Ser1252. Positions Arg1387 to Leu1481 are interaction with GORASP2. A lipid anchor (S-palmitoyl cysteine) is attached at Cys1396. The tract at residues His1453 to Leu1481 is disordered. At Ser1457 the chain carries Phosphoserine. A compositionally biased stretch (acidic residues) spans Glu1471–Leu1481. The short motif at Thr1479–Leu1481 is the PDZ-binding element.

This sequence belongs to the ABC transporter superfamily. ABCC family. CFTR transporter (TC 3.A.1.202) subfamily. In terms of assembly, monomer; does not require oligomerization for channel activity. May form oligomers in the membrane. Interacts with SLC26A3, SLC26A6 and NHERF1. Interacts with SHANK2. Interacts with MYO6. Interacts (via C-terminus) with GOPC (via PDZ domain); this promotes CFTR internalization and thereby decreases channel activity. Interacts with SLC4A7 through NHERF1. Found in a complex with MYO5B and RAB11A. Interacts with ANO1. Interacts with SLC26A8. Interacts with AHCYL1; the interaction increases CFTR activity. Interacts with CSE1L. The core-glycosylated form interacts with GORASP2 (via PDZ GRASP-type 1 domain) in respone to ER stress. Interacts with MARCHF2; the interaction leads to CFTR ubiqtuitination and degradation. Interacts with ADGRG2. N-glycosylated. In terms of processing, phosphorylated; cAMP treatment promotes phosphorylation and activates the channel. Dephosphorylation decreases the ATPase activity (in vitro). Phosphorylation at PKA sites activates the channel. Phosphorylation at PKC sites enhances the response to phosphorylation by PKA. Phosphorylated by AMPK; this inhibits channel activity. Post-translationally, ubiquitinated, leading to its degradation in the lysosome. Deubiquitination by USP10 in early endosomes enhances its endocytic recycling to the cell membrane. Ubiquitinated by RNF185 during ER stress. Ubiquitinated by MARCHF2.

It localises to the apical cell membrane. The protein localises to the early endosome membrane. Its subcellular location is the cell membrane. The protein resides in the recycling endosome membrane. It is found in the endoplasmic reticulum membrane. It localises to the nucleus. The catalysed reaction is ATP + H2O + closed Cl(-) channel = ADP + phosphate + open Cl(-) channel.. It carries out the reaction chloride(in) = chloride(out). It catalyses the reaction hydrogencarbonate(in) = hydrogencarbonate(out). The enzyme catalyses ATP + H2O = ADP + phosphate + H(+). Its function is as follows. Epithelial ion channel that plays an important role in the regulation of epithelial ion and water transport and fluid homeostasis. Mediates the transport of chloride ions across the cell membrane. Possesses an intrinsic ATPase activity and utilizes ATP to gate its channel; the passive flow of anions through the channel is gated by cycles of ATP binding and hydrolysis by the ATP-binding domains. The ion channel is also permeable to HCO(3)(-); selectivity depends on the extracellular chloride concentration. Exerts its function also by modulating the activity of other ion channels and transporters. Contributes to the regulation of the pH and the ion content of the epithelial fluid layer. Modulates the activity of the epithelial sodium channel (ENaC) complex, in part by regulating the cell surface expression of the ENaC complex. May regulate bicarbonate secretion and salvage in epithelial cells by regulating the transporter SLC4A7. Can inhibit the chloride channel activity of ANO1. Plays a role in the chloride and bicarbonate homeostasis during sperm epididymal maturation and capacitation. The chain is Cystic fibrosis transmembrane conductance regulator from Bos taurus (Bovine).